Consider the following 257-residue polypeptide: Acetylglutamate kinase (257 aa).

Residues 41 to 42 (GG), Arg-63, and Asn-158 each bind substrate.

This sequence belongs to the acetylglutamate kinase family. ArgB subfamily.

It localises to the cytoplasm. The catalysed reaction is N-acetyl-L-glutamate + ATP = N-acetyl-L-glutamyl 5-phosphate + ADP. The protein operates within amino-acid biosynthesis; L-arginine biosynthesis; N(2)-acetyl-L-ornithine from L-glutamate: step 2/4. Functionally, catalyzes the ATP-dependent phosphorylation of N-acetyl-L-glutamate. The protein is Acetylglutamate kinase of Bacteroides thetaiotaomicron (strain ATCC 29148 / DSM 2079 / JCM 5827 / CCUG 10774 / NCTC 10582 / VPI-5482 / E50).